The following is a 552-amino-acid chain: MRSDIVKKGFEKAPQRSLFKAMGYTDEEIRRPLIAVVNSWNEVVPGHIHLDKIAEAVKAGIRLAGATPMEFNVIGVCDGIAMGHIGMKYSLITRELIADSIEAMVMAHQFDGMVLIPNCDKIVPGMLMAAARVNIPSILISGGPMLAGRVDNKVCDLNSVFEAVGAYSAGKITDEELFALEENACPGCGSCSGMFTANTMNCLSEVLGMALPGNGTIPAVMAARIRLAKMAGMKIVELVERDIKPSDILTIEAFENALTVDMALGGSTNTILHLPAIANELGIKLNLDIINDISDKTPNLCKLSPAGHYHIEDLYFAGGVQAVMNELSKKGLIHLDLLTVTGKSVGENIKDAKVKDYNVIRPIDNPYSETGGLVIVRGNLAPDGAVVKKSAVPPKLMRHRGPARVFESGEEVFEAILKGKIQKGDVIVIRYEGPKGGPGMREMLSPTSALAGVGLIEDVALITDGRFSGATRGACFGHVSPEAAERGPIAAVQDGDIISIDIENKTLTLEVPEEEIKRRLESLGPFEPKVKKGYLYRYSKLVRSASTGAILE.

Asp78 is a binding site for Mg(2+). Residue Cys119 participates in [2Fe-2S] cluster binding. Residues Asp120 and Lys121 each coordinate Mg(2+). Lys121 carries the N6-carboxylysine modification. Cys191 is a [2Fe-2S] cluster binding site. Mg(2+) is bound at residue Glu442. Ser468 functions as the Proton acceptor in the catalytic mechanism.

This sequence belongs to the IlvD/Edd family. As to quaternary structure, homodimer. Requires [2Fe-2S] cluster as cofactor. The cofactor is Mg(2+).

The enzyme catalyses (2R)-2,3-dihydroxy-3-methylbutanoate = 3-methyl-2-oxobutanoate + H2O. It carries out the reaction (2R,3R)-2,3-dihydroxy-3-methylpentanoate = (S)-3-methyl-2-oxopentanoate + H2O. Its pathway is amino-acid biosynthesis; L-isoleucine biosynthesis; L-isoleucine from 2-oxobutanoate: step 3/4. It functions in the pathway amino-acid biosynthesis; L-valine biosynthesis; L-valine from pyruvate: step 3/4. Functions in the biosynthesis of branched-chain amino acids. Catalyzes the dehydration of (2R,3R)-2,3-dihydroxy-3-methylpentanoate (2,3-dihydroxy-3-methylvalerate) into 2-oxo-3-methylpentanoate (2-oxo-3-methylvalerate) and of (2R)-2,3-dihydroxy-3-methylbutanoate (2,3-dihydroxyisovalerate) into 2-oxo-3-methylbutanoate (2-oxoisovalerate), the penultimate precursor to L-isoleucine and L-valine, respectively. The sequence is that of Dihydroxy-acid dehydratase from Caldicellulosiruptor saccharolyticus (strain ATCC 43494 / DSM 8903 / Tp8T 6331).